The primary structure comprises 447 residues: Large ribosomal subunit protein bL27m (447 aa).

Basic and acidic residues-rich tracts occupy residues 377–402 and 409–447; these read QREAKKAREGGAAAEKSEKKEVKAEK and KVEKPKAPEAAKKESKPKVEEKKAAAAEPKKDSKTEKKD. Residues 377–447 form a disordered region; it reads QREAKKAREG…KKDSKTEKKD (71 aa).

This sequence belongs to the bacterial ribosomal protein bL27 family. Component of the mitochondrial large ribosomal subunit (mt-LSU). Mature N.crassa 74S mitochondrial ribosomes consist of a small (37S) and a large (54S) subunit. The 37S small subunit contains a 16S ribosomal RNA (16S mt-rRNA) and 32 different proteins. The 54S large subunit contains a 23S rRNA (23S mt-rRNA) and 42 different proteins.

It is found in the mitochondrion. Its function is as follows. Component of the mitochondrial ribosome (mitoribosome), a dedicated translation machinery responsible for the synthesis of mitochondrial genome-encoded proteins, including at least some of the essential transmembrane subunits of the mitochondrial respiratory chain. The mitoribosomes are attached to the mitochondrial inner membrane and translation products are cotranslationally integrated into the membrane. This Neurospora crassa (strain ATCC 24698 / 74-OR23-1A / CBS 708.71 / DSM 1257 / FGSC 987) protein is Large ribosomal subunit protein bL27m (mrp7).